We begin with the raw amino-acid sequence, 439 residues long: MEPSTAARAWALFWLLPPLLGAVCASGPRTLVLLDNLNVRETHSLFFRSLKDRGFELTFKTADDPSLSLIKYGEFLYDNLIIFSPSVEDFGGNINVETISAFIDGGGSVLVAASSDIGDPLRELGSECGIEFDEEKTAVIDHHNYDISDLGQHTLIVADTENLLKAPTIVGKSSLNPILFRGVGMVADPDNPLVLDILTGSSTSYSFFPDKPITQYPHAVGKNTLLIAGLQARNNARVIFSGSLDFFSDSFFNSAVQKAAPGSQRYSQTGNYELAVALSRWVFKEEGVLRVGPVSHHRVGETAPPNAYTVTDLVEYSIVIQQLSNGKWVPFDGDDIQLEFVRIDPFVRTFLKKKGGKYSVQFKLPDVYGVFQFKVDYNRLGYTHLYSSTQVSVRPLQHTQYERFIPSAYPYYASAFSMMLGLFIFSIVFLHMKEKEKSD.

A signal peptide spans 1 to 26 (MEPSTAARAWALFWLLPPLLGAVCAS). Over 27-410 (GPRTLVLLDN…YERFIPSAYP (384 aa)) the chain is Lumenal. A helical membrane pass occupies residues 411-430 (YYASAFSMMLGLFIFSIVFL). Residues 431–439 (HMKEKEKSD) are Cytoplasmic-facing.

It belongs to the DDOST 48 kDa subunit family. In terms of assembly, component of the oligosaccharyltransferase (OST) complex. OST exists in two different complex forms which contain common core subunits RPN1, RPN2, OST48, OST4, DAD1 and TMEM258, either STT3A or STT3B as catalytic subunits, and form-specific accessory subunits. STT3A complex assembly occurs through the formation of 3 subcomplexes. Subcomplex 1 contains RPN1 and TMEM258, subcomplex 2 contains the STT3A-specific subunits STT3A, DC2/OSTC, and KCP2 as well as the core subunit OST4, and subcomplex 3 contains RPN2, DAD1, and OST48. The STT3A complex can form stable complexes with the Sec61 complex or with both the Sec61 and TRAP complexes. Interacts with SMIM22.

The protein resides in the endoplasmic reticulum membrane. It functions in the pathway protein modification; protein glycosylation. Its function is as follows. Subunit of the oligosaccharyl transferase (OST) complex that catalyzes the initial transfer of a defined glycan (Glc(3)Man(9)GlcNAc(2) in eukaryotes) from the lipid carrier dolichol-pyrophosphate to an asparagine residue within an Asn-X-Ser/Thr consensus motif in nascent polypeptide chains, the first step in protein N-glycosylation. N-glycosylation occurs cotranslationally and the complex associates with the Sec61 complex at the channel-forming translocon complex that mediates protein translocation across the endoplasmic reticulum (ER). All subunits are required for a maximal enzyme activity. Required for the assembly of both SST3A- and SS3B-containing OST complexes. The polypeptide is Dolichyl-diphosphooligosaccharide--protein glycosyltransferase 48 kDa subunit (Pongo abelii (Sumatran orangutan)).